The primary structure comprises 701 residues: Elongation factor G (701 aa).

Residues 8–286 (ERIRNIGIIA…AIVHYLPSPV (279 aa)) enclose the tr-type G domain. GTP-binding positions include 17–24 (AHIDAGKT), 85–89 (DTPGH), and 139–142 (NKMD).

It belongs to the TRAFAC class translation factor GTPase superfamily. Classic translation factor GTPase family. EF-G/EF-2 subfamily.

Its subcellular location is the cytoplasm. Functionally, catalyzes the GTP-dependent ribosomal translocation step during translation elongation. During this step, the ribosome changes from the pre-translocational (PRE) to the post-translocational (POST) state as the newly formed A-site-bound peptidyl-tRNA and P-site-bound deacylated tRNA move to the P and E sites, respectively. Catalyzes the coordinated movement of the two tRNA molecules, the mRNA and conformational changes in the ribosome. The chain is Elongation factor G from Roseiflexus sp. (strain RS-1).